The following is a 464-amino-acid chain: Properdin (464 aa).

An N-terminal signal peptide occupies residues 1–22 (MPAEMQAPQWLLLLLVILPATG). 7 consecutive TSP type-1 domains span residues 24 to 72 (DPVL…QACR), 73 to 130 (SPQW…PCCP), 132 to 187 (MGGW…KTCP), 189 to 251 (HGAW…PPCP), 253 to 309 (AGGW…VPCP), 311 to 372 (NGEW…HNCI), and 374 to 457 (KGSW…PVCK). 3 disulfides stabilise this stretch: Cys-28–Cys-52, Cys-39–Cys-68, and Cys-53–Cys-71. C-linked (Man) tryptophan glycosylation is found at Trp-79 and Trp-82. 7 disulfide bridges follow: Cys-85-Cys-123, Cys-89-Cys-129, Cys-100-Cys-107, Cys-128-Cys-166, Cys-144-Cys-180, Cys-148-Cys-186, and Cys-159-Cys-170. C-linked (Man) tryptophan glycosylation is found at Trp-135, Trp-138, and Trp-141. A glycan (O-linked (Fuc...) threonine) is linked at Thr-147. C-linked (Man) tryptophan glycans are attached at residues Trp-192, Trp-195, and Trp-198. Cystine bridges form between Cys-201–Cys-244, Cys-205–Cys-250, and Cys-220–Cys-234. Residue Ser-204 is glycosylated (O-linked (Fuc...) serine). C-linked (Man) tryptophan glycans are attached at residues Trp-256 and Trp-259. Intrachain disulfides connect Cys-265–Cys-302, Cys-269–Cys-308, and Cys-280–Cys-292. Thr-268 carries O-linked (Fuc...) threonine glycosylation. 2 C-linked (Man) tryptophan glycosylation sites follow: Trp-317 and Trp-320. 3 cysteine pairs are disulfide-bonded: Cys-323–Cys-365, Cys-332–Cys-371, and Cys-345–Cys-355. The interval 346-354 (GGRKFNGKP) is interaction with Complement C3 beta chain. 3 C-linked (Man) tryptophan glycosylation sites follow: Trp-377, Trp-380, and Trp-383. 3 disulfides stabilise this stretch: Cys-386-Cys-450, Cys-390-Cys-456, and Cys-402-Cys-434. N-linked (GlcNAc...) asparagine glycosylation is present at Asn-423.

As to quaternary structure, in plasma, properdin exists as dimers, trimers or tetramers in the relative proportions of 26:54:20. Interacts with the pro-C3-convertase enzyme complex (C3b-Bb) comprised of Complement C3 beta chain (C3b) and the Complement factor B Bb fragment (Bb), where it binds (via its TSP type-1 5 domain) with C3b and Bb. This interaction stabilizes the complex and allows it to become the active C3-convertase enzyme complex (C3b-Bb-FP). Interacts with C3b. Interacts with CFB.

The protein localises to the secreted. In terms of biological role, a positive regulator of the alternate pathway of complement. It binds to and stabilizes the C3- and C5-convertase enzyme complexes. Inhibits CFI-CFH mediated degradation of Inhibits CFI-CFH mediated degradation of Complement C3 beta chain (C3b). The chain is Properdin (Cfp) from Mus musculus (Mouse).